A 274-amino-acid chain; its full sequence is uncharacterized protein (274 aa).

This is an uncharacterized protein from Methanocaldococcus jannaschii (strain ATCC 43067 / DSM 2661 / JAL-1 / JCM 10045 / NBRC 100440) (Methanococcus jannaschii).